A 420-amino-acid chain; its full sequence is Serine hydroxymethyltransferase (420 aa).

Residues Leu121 and Gly125–Leu127 contribute to the (6S)-5,6,7,8-tetrahydrofolate site. An N6-(pyridoxal phosphate)lysine modification is found at Lys230. Residues Glu246 and Ser354–Phe356 contribute to the (6S)-5,6,7,8-tetrahydrofolate site.

It belongs to the SHMT family. As to quaternary structure, homodimer. It depends on pyridoxal 5'-phosphate as a cofactor.

Its subcellular location is the cytoplasm. It catalyses the reaction (6R)-5,10-methylene-5,6,7,8-tetrahydrofolate + glycine + H2O = (6S)-5,6,7,8-tetrahydrofolate + L-serine. It participates in one-carbon metabolism; tetrahydrofolate interconversion. Its pathway is amino-acid biosynthesis; glycine biosynthesis; glycine from L-serine: step 1/1. Functionally, catalyzes the reversible interconversion of serine and glycine with tetrahydrofolate (THF) serving as the one-carbon carrier. This reaction serves as the major source of one-carbon groups required for the biosynthesis of purines, thymidylate, methionine, and other important biomolecules. Also exhibits THF-independent aldolase activity toward beta-hydroxyamino acids, producing glycine and aldehydes, via a retro-aldol mechanism. The sequence is that of Serine hydroxymethyltransferase from Rickettsia canadensis (strain McKiel).